We begin with the raw amino-acid sequence, 285 residues long: Troponin T, cardiac muscle (285 aa).

Residues 1-58 are compositionally biased toward acidic residues; sequence MSDVEEAVEEYEEQEEAAEEEHEEAVEEEAGGEAEAGEPCTAEDGEEEEGREAEDGPV. 2 disordered regions span residues 1–83 and 111–206; these read MSDV…GERV and RKKE…EKKK. Ser-2 is subject to N-acetylserine. At Ser-2 the chain carries Phosphoserine; by CK2. Residues 66–77 show a composition bias toward pro residues; it reads RPFMPNLVPPKI. Basic and acidic residues-rich tracts occupy residues 111–171 and 190–206; these read RKKE…DEAR and QTER…EKKK. Thr-191 is modified (phosphothreonine; by PKC/PRKCA). Ser-195 carries the post-translational modification Phosphoserine; by PKC/PRKCA. Thr-200 is subject to Phosphothreonine; by PKC/PRKCA and RAF1. A Phosphothreonine; by PKC/PRKCA modification is found at Thr-281.

This sequence belongs to the troponin T family. In terms of processing, the N-terminus is blocked. Post-translationally, phosphorylation at Thr-200 by PRKCA induces significant reduction in myofilament calcium sensitivity and actomyosin ATPase activity.

Troponin T is the tropomyosin-binding subunit of troponin, the thin filament regulatory complex which confers calcium-sensitivity to striated muscle actomyosin ATPase activity. The protein is Troponin T, cardiac muscle (TNNT2) of Bos taurus (Bovine).